Here is a 201-residue protein sequence, read N- to C-terminus: U1 small nuclear ribonucleoprotein C (201 aa).

The Matrin-type zinc-finger motif lies at 4–36; sequence YYCEYCDIYLTHSSPVGRRQHNQGRKHISAKIE. The segment covering 137–154 has biased composition (low complexity); the sequence is IQKPYNNFDNKNNNYNNK. Positions 137-176 are disordered; it reads IQKPYNNFDNKNNNYNNKPITNSSYKNDKQDYRNNNENND.

This sequence belongs to the U1 small nuclear ribonucleoprotein C family. U1 snRNP is composed of the 7 core Sm proteins B/B', D1, D2, D3, E, F and G that assemble in a heptameric protein ring on the Sm site of the small nuclear RNA to form the core snRNP, and at least 3 U1 snRNP-specific proteins U1-70K, U1-A and U1-C. U1-C interacts with U1 snRNA and the 5' splice-site region of the pre-mRNA.

Its subcellular location is the nucleus. Component of the spliceosomal U1 snRNP, which is essential for recognition of the pre-mRNA 5' splice-site and the subsequent assembly of the spliceosome. U1-C is directly involved in initial 5' splice-site recognition for both constitutive and regulated alternative splicing. The interaction with the 5' splice-site seems to precede base-pairing between the pre-mRNA and the U1 snRNA. Stimulates commitment or early (E) complex formation by stabilizing the base pairing of the 5' end of the U1 snRNA and the 5' splice-site region. The chain is U1 small nuclear ribonucleoprotein C from Plasmodium yoelii yoelii.